We begin with the raw amino-acid sequence, 127 residues long: Aspartate 1-decarboxylase (127 aa).

Residue S25 is the Schiff-base intermediate with substrate; via pyruvic acid of the active site. S25 carries the pyruvic acid (Ser) modification. T57 lines the substrate pocket. Residue Y58 is the Proton donor of the active site. 73–75 (GAA) provides a ligand contact to substrate.

It belongs to the PanD family. As to quaternary structure, heterooctamer of four alpha and four beta subunits. Requires pyruvate as cofactor. Is synthesized initially as an inactive proenzyme, which is activated by self-cleavage at a specific serine bond to produce a beta-subunit with a hydroxyl group at its C-terminus and an alpha-subunit with a pyruvoyl group at its N-terminus.

Its subcellular location is the cytoplasm. It catalyses the reaction L-aspartate + H(+) = beta-alanine + CO2. It functions in the pathway cofactor biosynthesis; (R)-pantothenate biosynthesis; beta-alanine from L-aspartate: step 1/1. Catalyzes the pyruvoyl-dependent decarboxylation of aspartate to produce beta-alanine. In Clostridium botulinum (strain ATCC 19397 / Type A), this protein is Aspartate 1-decarboxylase.